The primary structure comprises 170 residues: Phosphopantetheine adenylyltransferase (170 aa).

Position 17 (threonine 17) interacts with substrate. Residues 17–18 and histidine 25 each bind ATP; that span reads TF. Lysine 49, leucine 81, and arginine 95 together coordinate substrate. Residues 96-98, glutamate 106, and 131-137 contribute to the ATP site; these read GLR and LMYISST.

The protein belongs to the bacterial CoaD family. In terms of assembly, homohexamer. Requires Mg(2+) as cofactor.

It is found in the cytoplasm. The enzyme catalyses (R)-4'-phosphopantetheine + ATP + H(+) = 3'-dephospho-CoA + diphosphate. Its pathway is cofactor biosynthesis; coenzyme A biosynthesis; CoA from (R)-pantothenate: step 4/5. Its function is as follows. Reversibly transfers an adenylyl group from ATP to 4'-phosphopantetheine, yielding dephospho-CoA (dPCoA) and pyrophosphate. The protein is Phosphopantetheine adenylyltransferase of Legionella pneumophila subsp. pneumophila (strain Philadelphia 1 / ATCC 33152 / DSM 7513).